The primary structure comprises 293 residues: MNRLFSGRSDMPFALLLLAPSLLLLGGLVAWPMVSNIEISFLRLPLNPNIESTFVGVSNYVRILSDPGFWHSLWMTVWYTALVVAGSTVLGLAVAMFFNREFRLRKTARSLVILSYVTPSISLVFAWKYMFNNGYGIVNYLGVDLLHLYEQAPLWFDNPGSSFVLVVLFAIWRYFPYAFISFLAILQTIDKSLYEAAEMDGANAWQRFRIVTLPAIMPVLATVVTLRTIWMFYMFADVYLLTTKVDILGVYLYKTAFAFNDLGKAAAISVVLFIIIFAVILLTRKRVNLNGNK.

Residues 1–12 (MNRLFSGRSDMP) lie on the Periplasmic side of the membrane. The helical transmembrane segment at 13-33 (FALLLLAPSLLLLGGLVAWPM) threads the bilayer. Over 34 to 77 (VSNIEISFLRLPLNPNIESTFVGVSNYVRILSDPGFWHSLWMTV) the chain is Cytoplasmic. The ABC transmembrane type-1 domain occupies 73 to 283 (LWMTVWYTAL…IIIFAVILLT (211 aa)). The helical transmembrane segment at 78–98 (WYTALVVAGSTVLGLAVAMFF) threads the bilayer. The Periplasmic portion of the chain corresponds to 99–110 (NREFRLRKTARS). The helical transmembrane segment at 111 to 131 (LVILSYVTPSISLVFAWKYMF) threads the bilayer. Residues 132–135 (NNGY) are Cytoplasmic-facing. A helical transmembrane segment spans residues 136-156 (GIVNYLGVDLLHLYEQAPLWF). The Periplasmic segment spans residues 157–162 (DNPGSS). A helical membrane pass occupies residues 163-183 (FVLVVLFAIWRYFPYAFISFL). Over 184 to 214 (AILQTIDKSLYEAAEMDGANAWQRFRIVTLP) the chain is Cytoplasmic. The chain crosses the membrane as a helical span at residues 215-235 (AIMPVLATVVTLRTIWMFYMF). At 236–261 (ADVYLLTTKVDILGVYLYKTAFAFND) the chain is on the periplasmic side. Residues 262–282 (LGKAAAISVVLFIIIFAVILL) traverse the membrane as a helical segment. The Cytoplasmic portion of the chain corresponds to 283-293 (TRKRVNLNGNK).

Belongs to the binding-protein-dependent transport system permease family. MalFG subfamily.

The protein resides in the cell inner membrane. Its function is as follows. Probably part of the binding-protein-dependent transport system YcjNOP. Probably responsible for the translocation of the substrate across the membrane. The polypeptide is Inner membrane ABC transporter permease protein YcjO (ycjO) (Escherichia coli (strain K12)).